A 272-amino-acid chain; its full sequence is Type III pantothenate kinase (272 aa).

Asp6–Val13 contacts ATP. A substrate-binding site is contributed by Gly109–Arg112. Residue Asp111 is the Proton acceptor of the active site. Asp131 serves as a coordination point for K(+). An ATP-binding site is contributed by Ser134. Position 186 (Thr186) interacts with substrate.

The protein belongs to the type III pantothenate kinase family. Homodimer. Requires NH4(+) as cofactor. K(+) is required as a cofactor.

Its subcellular location is the cytoplasm. It carries out the reaction (R)-pantothenate + ATP = (R)-4'-phosphopantothenate + ADP + H(+). Its pathway is cofactor biosynthesis; coenzyme A biosynthesis; CoA from (R)-pantothenate: step 1/5. In terms of biological role, catalyzes the phosphorylation of pantothenate (Pan), the first step in CoA biosynthesis. This chain is Type III pantothenate kinase, found in Mycobacterium ulcerans (strain Agy99).